The primary structure comprises 147 residues: Hemoglobin subunit epsilon (147 aa).

Residues 3 to 147 enclose the Globin domain; the sequence is HFTAEEKTAI…VASALAHKYH (145 aa). 2 positions are modified to phosphoserine: serine 14 and serine 51. Heme b-binding residues include histidine 64 and histidine 93.

This sequence belongs to the globin family. Red blood cells.

Hemoglobin epsilon chain is an embryonic-type beta-type chain found in prenatal and neonatal marsupials. This Notamacropus eugenii (Tammar wallaby) protein is Hemoglobin subunit epsilon (HBE1).